Consider the following 266-residue polypeptide: 3-methyl-2-oxobutanoate hydroxymethyltransferase (266 aa).

Mg(2+)-binding residues include Asp47 and Asp86. 3-methyl-2-oxobutanoate is bound by residues 47–48, Asp86, and Lys114; that span reads DS. Glu116 serves as a coordination point for Mg(2+). Glu183 acts as the Proton acceptor in catalysis.

It belongs to the PanB family. As to quaternary structure, homodecamer; pentamer of dimers. Requires Mg(2+) as cofactor.

Its subcellular location is the cytoplasm. The enzyme catalyses 3-methyl-2-oxobutanoate + (6R)-5,10-methylene-5,6,7,8-tetrahydrofolate + H2O = 2-dehydropantoate + (6S)-5,6,7,8-tetrahydrofolate. It participates in cofactor biosynthesis; (R)-pantothenate biosynthesis; (R)-pantoate from 3-methyl-2-oxobutanoate: step 1/2. Catalyzes the reversible reaction in which hydroxymethyl group from 5,10-methylenetetrahydrofolate is transferred onto alpha-ketoisovalerate to form ketopantoate. This is 3-methyl-2-oxobutanoate hydroxymethyltransferase from Idiomarina loihiensis (strain ATCC BAA-735 / DSM 15497 / L2-TR).